The sequence spans 374 residues: tRNA-specific 2-thiouridylase MnmA (374 aa).

ATP contacts are provided by residues 13-20 and Met39; that span reads GMSGGVDS. The interval 99–101 is interaction with target base in tRNA; the sequence is NPD. Cys104 (nucleophile) is an active-site residue. An intrachain disulfide couples Cys104 to Cys201. Residue Gly128 participates in ATP binding. Residues 151 to 153 form an interaction with tRNA region; that stretch reads KDQ. The active-site Cysteine persulfide intermediate is Cys201. The interaction with tRNA stretch occupies residues 313-314; sequence RY.

Belongs to the MnmA/TRMU family.

The protein resides in the cytoplasm. It carries out the reaction S-sulfanyl-L-cysteinyl-[protein] + uridine(34) in tRNA + AH2 + ATP = 2-thiouridine(34) in tRNA + L-cysteinyl-[protein] + A + AMP + diphosphate + H(+). In terms of biological role, catalyzes the 2-thiolation of uridine at the wobble position (U34) of tRNA, leading to the formation of s(2)U34. In Streptococcus equi subsp. equi (strain 4047), this protein is tRNA-specific 2-thiouridylase MnmA.